An 80-amino-acid chain; its full sequence is Metallothionein-like protein type 2, MT2-28 (80 aa).

This sequence belongs to the metallothionein superfamily. Type 15 family.

In terms of biological role, metallothioneins have a high content of cysteine residues that bind various heavy metals. The chain is Metallothionein-like protein type 2, MT2-28 from Brassica juncea (Indian mustard).